Reading from the N-terminus, the 409-residue chain is Elongation factor Tu (409 aa).

Residues 10 to 214 (KPHVNVGTIG…AVDSYIPTPE (205 aa)) form the tr-type G domain. Residues 19–26 (GHVDHGKT) form a G1 region. A GTP-binding site is contributed by 19–26 (GHVDHGKT). Threonine 26 provides a ligand contact to Mg(2+). Positions 60-64 (GITIN) are G2. A G3 region spans residues 81–84 (DCPG). GTP contacts are provided by residues 81–85 (DCPGH) and 136–139 (NKAD). The interval 136–139 (NKAD) is G4. A G5 region spans residues 174–176 (SAL).

The protein belongs to the TRAFAC class translation factor GTPase superfamily. Classic translation factor GTPase family. EF-Tu/EF-1A subfamily. Monomer.

It localises to the cytoplasm. The catalysed reaction is GTP + H2O = GDP + phosphate + H(+). GTP hydrolase that promotes the GTP-dependent binding of aminoacyl-tRNA to the A-site of ribosomes during protein biosynthesis. This chain is Elongation factor Tu, found in Synechococcus sp. (strain JA-2-3B'a(2-13)) (Cyanobacteria bacterium Yellowstone B-Prime).